The sequence spans 370 residues: Pituitary-specific positive transcription factor 1 (370 aa).

A 9aaTAD motif is present at residues 5-13 (AFASSDNFV). In terms of domain architecture, POU-specific spans 202-276 (MDSPEIRELE…ILSKWLEEAE (75 aa)). Residues 292–351 (KRKRRTTISIAAKEALERHFGEQSKPSSQEIMRMAEGLNLEKEVVRVWFCNRRQREKRVK) constitute a DNA-binding region (homeobox).

It belongs to the POU transcription factor family. Class-1 subfamily. Pituitary gland.

The protein resides in the nucleus. Its function is as follows. Transcription factor that activates growth hormone and prolactin genes. Specifically binds to the consensus sequence 5'-TAAAT-3'. The chain is Pituitary-specific positive transcription factor 1 (POU1F1) from Meleagris gallopavo (Wild turkey).